We begin with the raw amino-acid sequence, 399 residues long: Chorismate synthase (399 aa).

2 residues coordinate NADP(+): Arg40 and Arg46. FMN-binding positions include 135–137, 256–257, Gly301, 316–320, and Arg342; these read RAS, QA, and KPIAT.

It belongs to the chorismate synthase family. In terms of assembly, homotetramer. The cofactor is FMNH2.

The catalysed reaction is 5-O-(1-carboxyvinyl)-3-phosphoshikimate = chorismate + phosphate. It participates in metabolic intermediate biosynthesis; chorismate biosynthesis; chorismate from D-erythrose 4-phosphate and phosphoenolpyruvate: step 7/7. Catalyzes the anti-1,4-elimination of the C-3 phosphate and the C-6 proR hydrogen from 5-enolpyruvylshikimate-3-phosphate (EPSP) to yield chorismate, which is the branch point compound that serves as the starting substrate for the three terminal pathways of aromatic amino acid biosynthesis. This reaction introduces a second double bond into the aromatic ring system. The chain is Chorismate synthase from Paenarthrobacter aurescens (strain TC1).